We begin with the raw amino-acid sequence, 253 residues long: Isoprenyl transferase (253 aa).

The active site involves aspartate 30. A Mg(2+)-binding site is contributed by aspartate 30. Residues 31 to 34, tryptophan 35, histidine 51, and 79 to 81 contribute to the substrate site; these read GNRR and STE. The Proton acceptor role is filled by asparagine 82. Residues phenylalanine 83, arginine 85, arginine 202, and 208 to 210 each bind substrate; that span reads RVS. Glutamate 221 lines the Mg(2+) pocket.

Belongs to the UPP synthase family. As to quaternary structure, homodimer. Mg(2+) is required as a cofactor.

Catalyzes the condensation of isopentenyl diphosphate (IPP) with allylic pyrophosphates generating different type of terpenoids. The sequence is that of Isoprenyl transferase from Chlamydia trachomatis serovar D (strain ATCC VR-885 / DSM 19411 / UW-3/Cx).